The primary structure comprises 420 residues: D-tagatose-1,6-bisphosphate aldolase subunit GatZ (420 aa).

Belongs to the GatZ/KbaZ family. GatZ subfamily. In terms of assembly, forms a complex with GatY.

It functions in the pathway carbohydrate metabolism; D-tagatose 6-phosphate degradation; D-glyceraldehyde 3-phosphate and glycerone phosphate from D-tagatose 6-phosphate: step 2/2. Functionally, component of the tagatose-1,6-bisphosphate aldolase GatYZ that is required for full activity and stability of the Y subunit. Could have a chaperone-like function for the proper and stable folding of GatY. When expressed alone, GatZ does not show any aldolase activity. Is involved in the catabolism of galactitol. The polypeptide is D-tagatose-1,6-bisphosphate aldolase subunit GatZ (Escherichia coli O9:H4 (strain HS)).